We begin with the raw amino-acid sequence, 507 residues long: Photosystem II CP47 reaction center protein (507 aa).

Over 2–16 the chain is Cytoplasmic; that stretch reads GLPWYRVHTVVLNDP. The helical transmembrane segment at 17–39 threads the bilayer; that stretch reads GRLISVHLMHTALVAGWAGSMAL. The Lumenal, thylakoid portion of the chain corresponds to 40 to 94; it reads YELAIFDSSDAVLNPMWRQGMFVLPFMARLGVTSSWNGWSVTGETGLDPGFWSFE. The helical transmembrane segment at 95-116 threads the bilayer; that stretch reads GVAAAHIVLSGLLFLAAVWHWV. Over 117–134 the chain is Cytoplasmic; it reads FWDLELFVDPRTGESALD. Residues 135–159 traverse the membrane as a helical segment; sequence LPKMFGIHLFLSGLLCFGFGAFHLT. At 160 to 196 the chain is on the lumenal, thylakoid side; the sequence is GVWGPGMWVSDPYGLTGHVQPVAPEWGPAGFNPFNPG. The chain crosses the membrane as a helical span at residues 197–218; that stretch reads GVVAHHIAAGIVGIIAGLFHLT. Residues 219-233 are Cytoplasmic-facing; sequence VRPPERLYKALRMGN. A helical transmembrane segment spans residues 234–255; sequence IETVLSSSIAAVFFAAFVVAGT. The Lumenal, thylakoid portion of the chain corresponds to 256 to 450; it reads MWYGNATTPI…GVFRTSPRGW (195 aa). Residues 451–474 form a helical membrane-spanning segment; that stretch reads FTFGHAVFALLFFFGHIWHGSRTL. Residues 475–507 are Cytoplasmic-facing; sequence FRDVFAGVDPGLEEQVEFGVFAKVGDLSTRKEA.

The protein belongs to the PsbB/PsbC family. PsbB subfamily. PSII is composed of 1 copy each of membrane proteins PsbA, PsbB, PsbC, PsbD, PsbE, PsbF, PsbH, PsbI, PsbJ, PsbK, PsbL, PsbM, PsbT, PsbX, Psb30/Ycf12, peripheral proteins PsbO, CyanoQ (PsbQ), PsbU, PsbV and a large number of cofactors. It forms dimeric complexes. Contacts PsbQ. Binds multiple chlorophylls. PSII binds additional chlorophylls, carotenoids and specific lipids. serves as cofactor.

The protein resides in the cellular thylakoid membrane. One of the components of the core complex of photosystem II (PSII). It binds chlorophyll and helps catalyze the primary light-induced photochemical processes of PSII. PSII is a light-driven water:plastoquinone oxidoreductase, using light energy to abstract electrons from H(2)O, generating O(2) and a proton gradient subsequently used for ATP formation. The chain is Photosystem II CP47 reaction center protein from Synechocystis sp. (strain ATCC 27184 / PCC 6803 / Kazusa).